The following is a 269-amino-acid chain: Imidazole glycerol phosphate synthase subunit HisF (269 aa).

Catalysis depends on residues Asp-23 and Asp-142.

The protein belongs to the HisA/HisF family. In terms of assembly, heterodimer of HisH and HisF.

It localises to the cytoplasm. The catalysed reaction is 5-[(5-phospho-1-deoxy-D-ribulos-1-ylimino)methylamino]-1-(5-phospho-beta-D-ribosyl)imidazole-4-carboxamide + L-glutamine = D-erythro-1-(imidazol-4-yl)glycerol 3-phosphate + 5-amino-1-(5-phospho-beta-D-ribosyl)imidazole-4-carboxamide + L-glutamate + H(+). It participates in amino-acid biosynthesis; L-histidine biosynthesis; L-histidine from 5-phospho-alpha-D-ribose 1-diphosphate: step 5/9. In terms of biological role, IGPS catalyzes the conversion of PRFAR and glutamine to IGP, AICAR and glutamate. The HisF subunit catalyzes the cyclization activity that produces IGP and AICAR from PRFAR using the ammonia provided by the HisH subunit. This chain is Imidazole glycerol phosphate synthase subunit HisF, found in Bordetella parapertussis (strain 12822 / ATCC BAA-587 / NCTC 13253).